Consider the following 963-residue polypeptide: Kinesin-1 heavy chain (963 aa).

Residue A2 is modified to N-acetylalanine. A Kinesin motor domain is found at 8–325 (NIKVMCRFRP…LLFGQRAKTI (318 aa)). 85-92 (GQTSSGKT) serves as a coordination point for ATP. Residue K213 forms a Glycyl lysine isopeptide (Lys-Gly) (interchain with G-Cter in SUMO2) linkage. Positions 329-914 (VCVNVELTAE…AVRSKNMARR (586 aa)) form a coiled coil. The disordered stretch occupies residues 908-963 (SKNMARRGHSAQIAKPIRPGQHPAASPTHPSAIRGGGAFVQNSQPVAVRGGGGKQV). A globular region spans residues 915-963 (GHSAQIAKPIRPGQHPAASPTHPSAIRGGGAFVQNSQPVAVRGGGGKQV). A Phosphoserine modification is found at S933. The residue at position 956 (R956) is an Omega-N-methylarginine.

Belongs to the TRAFAC class myosin-kinesin ATPase superfamily. Kinesin family. Kinesin subfamily. As to quaternary structure, oligomer composed of two heavy chains and two light chains. Interacts with GRIP1 and PPP1R42. Interacts with SYBU. Interacts with JAKMIP1. Interacts with PLEKHM2. Interacts with ECPAS. Interacts with ZFYVE27. Found in a complex with OGT, RHOT1, RHOT2 and TRAK1. Interacts with APP (via cytoplasmic domain).

It localises to the cytoplasm. The protein resides in the cytoskeleton. Its subcellular location is the cytolytic granule membrane. It is found in the lysosome membrane. Its function is as follows. Microtubule-dependent motor required for normal distribution of mitochondria and lysosomes. Can induce formation of neurite-like membrane protrusions in non-neuronal cells in a ZFYVE27-dependent manner. Regulates centrosome and nuclear positioning during mitotic entry. During the G2 phase of the cell cycle in a BICD2-dependent manner, antagonizes dynein function and drives the separation of nuclei and centrosomes. Required for anterograde axonal transportation of MAPK8IP3/JIP3 which is essential for MAPK8IP3/JIP3 function in axon elongation. Through binding with PLEKHM2 and ARL8B, directs lysosome movement toward microtubule plus ends. Involved in NK cell-mediated cytotoxicity. Drives the polarization of cytolytic granules and microtubule-organizing centers (MTOCs) toward the immune synapse between effector NK lymphocytes and target cells. The protein is Kinesin-1 heavy chain of Homo sapiens (Human).